A 349-amino-acid chain; its full sequence is GATA zinc finger domain-containing protein 24 (349 aa).

Low complexity-rich tracts occupy residues 95–169 (NINR…VNKN) and 177–195 (NKSC…NNNS). Disordered regions lie at residues 95–227 (NINR…PVIK) and 250–294 (DYDY…KPVQ). A compositionally biased stretch (basic and acidic residues) spans 196-212 (ENKEKNNINNNNEKENN). Over residues 257–272 (SNESSSPTLSASTLSS) the composition is skewed to low complexity. Basic residues predominate over residues 278–289 (KVLKRGRGRPSK). The segment at 295 to 323 (CFSCFRSNTPEWRKGKDKDGNVIDLCNAC) adopts a GATA-type zinc-finger fold.

The protein is GATA zinc finger domain-containing protein 24 (gtaX) of Dictyostelium discoideum (Social amoeba).